A 242-amino-acid polypeptide reads, in one-letter code: Probable porphobilinogen deaminase (242 aa).

It belongs to the HMBS family.

It carries out the reaction 4 porphobilinogen + H2O = hydroxymethylbilane + 4 NH4(+). The protein operates within porphyrin-containing compound metabolism; protoporphyrin-IX biosynthesis; coproporphyrinogen-III from 5-aminolevulinate: step 2/4. Functionally, tetrapolymerization of the monopyrrole PBG into the hydroxymethylbilane pre-uroporphyrinogen in several discrete steps. This is Probable porphobilinogen deaminase (hemC) from Chlamydia muridarum (strain MoPn / Nigg).